The chain runs to 75 residues: Conotoxin Vn5.5 (75 aa).

A signal peptide spans 1–19 (MLCLPVFIILLLLASPAAP). A propeptide spanning residues 20–59 (NPLEKRIQSDLIRAALEDADMKTDEREIVNIIDSISDVAK) is cleaved from the precursor. Q60 is subject to Pyrrolidone carboxylic acid.

The protein belongs to the conotoxin T superfamily. In terms of processing, contains 2 disulfide bonds that can be either 'C1-C3, C2-C4' or 'C1-C4, C2-C3', since these disulfide connectivities have been observed for conotoxins with cysteine framework V (for examples, see AC P0DQQ7 and AC P81755). In terms of tissue distribution, expressed by the venom duct.

Its subcellular location is the secreted. The polypeptide is Conotoxin Vn5.5 (Conus ventricosus (Mediterranean cone)).